Here is a 264-residue protein sequence, read N- to C-terminus: Apolipoprotein A-I (264 aa).

A signal peptide spans 1 to 18; that stretch reads MKAVVLAVAVLFLTGSQA. 2 repeat units span residues 67 to 88 and 89 to 110. The segment at 67–264 is 10 X approximate tandem repeats; it reads LNLLANWNTL…DQASKQLSAQ (198 aa). Position 109 is a methionine sulfoxide (Met109). Residues 111-121 form a 3; half-length repeat; sequence KDLEEVKQKVQ. 5 repeat units span residues 122 to 142, 144 to 165, 166 to 187, 188 to 208, and 209 to 229. Met193 is modified (methionine sulfoxide). A 9; half-length repeat occupies 230-240; the sequence is PALEDLRQGLM. A Methionine sulfoxide modification is found at Met240. Copy 10 of the repeat occupies 241 to 264; sequence PVMESLKASFLSSIDQASKQLSAQ.

The protein belongs to the apolipoprotein A1/A4/E family. As to quaternary structure, homodimer. Interacts with APOA1BP and CLU. Component of a sperm activating protein complex (SPAP), consisting of APOA1, an immunoglobulin heavy chain, an immunoglobulin light chain and albumin. Interacts with NDRG1. Interacts with SCGB3A2. Interacts with NAXE and YJEFN3. In terms of processing, glycosylated. Palmitoylated. Post-translationally, phosphorylation sites are present in the extracellular medium. Major protein of plasma HDL, also found in chylomicrons.

The protein localises to the secreted. In terms of biological role, participates in the reverse transport of cholesterol from tissues to the liver for excretion by promoting cholesterol efflux from tissues and by acting as a cofactor for the lecithin cholesterol acyltransferase (LCAT). As part of the SPAP complex, activates spermatozoa motility. This is Apolipoprotein A-I (Apoa1) from Heterocephalus glaber (Naked mole rat).